A 142-amino-acid polypeptide reads, in one-letter code: Large ribosomal subunit protein uL11 (142 aa).

This sequence belongs to the universal ribosomal protein uL11 family. As to quaternary structure, part of the ribosomal stalk of the 50S ribosomal subunit. Interacts with L10 and the large rRNA to form the base of the stalk. L10 forms an elongated spine to which L12 dimers bind in a sequential fashion forming a multimeric L10(L12)X complex. One or more lysine residues are methylated.

In terms of biological role, forms part of the ribosomal stalk which helps the ribosome interact with GTP-bound translation factors. In Magnetococcus marinus (strain ATCC BAA-1437 / JCM 17883 / MC-1), this protein is Large ribosomal subunit protein uL11.